A 1653-amino-acid chain; its full sequence is Ciliary rootlet coiled-coil protein 2 (1653 aa).

Polar residues predominate over residues 1–17 (MSSASSEPGNGDASQQP). A disordered region spans residues 1 to 57 (MSSASSEPGNGDASQQPLLGLDTVIQRLEDTILSPTASREDRALTVRGEGRQASPTP). Residues 38 to 50 (SREDRALTVRGEG) show a composition bias toward basic and acidic residues. Coiled coils occupy residues 86-145 (VARV…SELE) and 310-351 (KVAL…LVAQ). The interval 367 to 396 (LGEPRRPLRSPQRATSPHQGASPPHICSPA) is disordered. The stretch at 423–1215 (LKSSQALVAS…QRKLAEVEAA (793 aa)) forms a coiled coil. Residues 1302 to 1356 (GLQRQSPWASPEQPGSPTKGSDSSQALPGQQGTSPPARPHSPLRWPSPTPGGRSS) are disordered. Residues 1304 to 1335 (QRQSPWASPEQPGSPTKGSDSSQALPGQQGTS) show a composition bias toward polar residues. Residues 1361–1570 (VATVQDILRD…QAQMTEMEQA (210 aa)) are a coiled coil.

Belongs to the rootletin family.

In Homo sapiens (Human), this protein is Ciliary rootlet coiled-coil protein 2.